The primary structure comprises 339 residues: Aspartate carbamoyltransferase catalytic subunit (339 aa).

Residues arginine 60 and threonine 61 each coordinate carbamoyl phosphate. Residue lysine 88 participates in L-aspartate binding. Residues arginine 110, histidine 143, and glutamine 146 each contribute to the carbamoyl phosphate site. Residues arginine 183 and arginine 254 each contribute to the L-aspartate site. The carbamoyl phosphate site is built by glycine 295 and proline 296.

It belongs to the aspartate/ornithine carbamoyltransferase superfamily. ATCase family. In terms of assembly, heterododecamer (2C3:3R2) of six catalytic PyrB chains organized as two trimers (C3), and six regulatory PyrI chains organized as three dimers (R2).

It carries out the reaction carbamoyl phosphate + L-aspartate = N-carbamoyl-L-aspartate + phosphate + H(+). It participates in pyrimidine metabolism; UMP biosynthesis via de novo pathway; (S)-dihydroorotate from bicarbonate: step 2/3. In terms of biological role, catalyzes the condensation of carbamoyl phosphate and aspartate to form carbamoyl aspartate and inorganic phosphate, the committed step in the de novo pyrimidine nucleotide biosynthesis pathway. The sequence is that of Aspartate carbamoyltransferase catalytic subunit from Prochlorococcus marinus (strain MIT 9312).